Here is a 198-residue protein sequence, read N- to C-terminus: Elongation factor Ts (198 aa).

The involved in Mg(2+) ion dislocation from EF-Tu stretch occupies residues 81 to 84 (TDFV).

The protein belongs to the EF-Ts family.

It localises to the cytoplasm. In terms of biological role, associates with the EF-Tu.GDP complex and induces the exchange of GDP to GTP. It remains bound to the aminoacyl-tRNA.EF-Tu.GTP complex up to the GTP hydrolysis stage on the ribosome. The sequence is that of Elongation factor Ts from Dictyoglomus turgidum (strain DSM 6724 / Z-1310).